We begin with the raw amino-acid sequence, 162 residues long: NADH-quinone oxidoreductase subunit I (162 aa).

2 4Fe-4S ferredoxin-type domains span residues 54–83 (RRYE…IESE) and 93–122 (TRYD…ETQI). Residues cysteine 63, cysteine 66, cysteine 69, cysteine 73, cysteine 102, cysteine 105, cysteine 108, and cysteine 112 each contribute to the [4Fe-4S] cluster site.

This sequence belongs to the complex I 23 kDa subunit family. In terms of assembly, NDH-1 is composed of 14 different subunits. Subunits NuoA, H, J, K, L, M, N constitute the membrane sector of the complex. [4Fe-4S] cluster is required as a cofactor.

It is found in the cell inner membrane. It catalyses the reaction a quinone + NADH + 5 H(+)(in) = a quinol + NAD(+) + 4 H(+)(out). Its function is as follows. NDH-1 shuttles electrons from NADH, via FMN and iron-sulfur (Fe-S) centers, to quinones in the respiratory chain. The immediate electron acceptor for the enzyme in this species is believed to be ubiquinone. Couples the redox reaction to proton translocation (for every two electrons transferred, four hydrogen ions are translocated across the cytoplasmic membrane), and thus conserves the redox energy in a proton gradient. This is NADH-quinone oxidoreductase subunit I from Burkholderia pseudomallei (strain 668).